Here is a 301-residue protein sequence, read N- to C-terminus: Inosose dehydratase (301 aa).

Belongs to the IolE/MocC family. It depends on glutathione as a cofactor. Co(2+) serves as cofactor. The cofactor is Mn(2+).

The catalysed reaction is scyllo-inosose = 3D-3,5/4-trihydroxycyclohexane-1,2-dione + H2O. Catalyzes the dehydration of inosose (2-keto-myo-inositol, 2KMI or 2,4,6/3,5-pentahydroxycyclohexanone) to 3D-(3,5/4)-trihydroxycyclohexane-1,2-dione (D-2,3-diketo-4-deoxy-epi-inositol). The protein is Inosose dehydratase of Salmonella typhimurium (strain LT2 / SGSC1412 / ATCC 700720).